Reading from the N-terminus, the 84-residue chain is Large ribosomal subunit protein bL27 (84 aa).

Positions 1–21 (MAHKKGGGSTKNGRDSNPQYL) are disordered.

It belongs to the bacterial ribosomal protein bL27 family.

This Chloroherpeton thalassium (strain ATCC 35110 / GB-78) protein is Large ribosomal subunit protein bL27.